A 137-amino-acid chain; its full sequence is Putative pre-16S rRNA nuclease (137 aa).

The protein belongs to the YqgF nuclease family.

Its subcellular location is the cytoplasm. Its function is as follows. Could be a nuclease involved in processing of the 5'-end of pre-16S rRNA. This chain is Putative pre-16S rRNA nuclease, found in Oceanobacillus iheyensis (strain DSM 14371 / CIP 107618 / JCM 11309 / KCTC 3954 / HTE831).